Here is a 128-residue protein sequence, read N- to C-terminus: MHCFIIFSVINLALLQLALGASLPTSHATYPQSQPHATKRSFGPAVPSSVNGFGPFGSTYISANQRQSQQSDSNYSYNSGFGPYGGTSISASQHQRQDSQSNYEYYNNGGGLYSKDAKKELKDPSTSA.

2 stretches are compositionally biased toward polar residues: residues histidine 27 to histidine 36 and threonine 87 to serine 101. 2 disordered regions span residues histidine 27–serine 48 and glycine 86–alanine 128. Residues lysine 115 to alanine 128 show a composition bias toward basic and acidic residues.

Functionally, general role in the development of germlings including formation of the infection structures. This chain is Infection structure-specific protein 56 (INF56), found in Uromyces appendiculatus (Rust fungus).